A 109-amino-acid chain; its full sequence is Tetracenomycin F2 cyclase (109 aa).

In terms of assembly, homodimer.

The enzyme catalyses tetracenomycin F2 + H(+) = tetracenomycin F1 + H2O. The protein operates within antibiotic biosynthesis; tetracenomycin C biosynthesis. In terms of biological role, catalyzing the conversion of tetracenomycin F2 to tetracenomycin F1. The sequence is that of Tetracenomycin F2 cyclase (tcmI) from Streptomyces glaucescens.